Reading from the N-terminus, the 30-residue chain is Photosystem I reaction center subunit XII (30 aa).

A helical transmembrane segment spans residues 7–26 (IMVALFAALFTGILALRLGT).

It belongs to the PsaM family.

The protein resides in the plastid. Its subcellular location is the chloroplast thylakoid membrane. The polypeptide is Photosystem I reaction center subunit XII (Mesostigma viride (Green alga)).